Here is a 134-residue protein sequence, read N- to C-terminus: ATP synthase epsilon chain (134 aa).

Residues 100-134 (NQKLQNENLSEEEKEHYEKQRSRSQALLNLASAKV) are disordered. Basic and acidic residues predominate over residues 110 to 120 (EEEKEHYEKQR).

It belongs to the ATPase epsilon chain family. F-type ATPases have 2 components, CF(1) - the catalytic core - and CF(0) - the membrane proton channel. CF(1) has five subunits: alpha(3), beta(3), gamma(1), delta(1), epsilon(1). CF(0) has three main subunits: a, b and c.

The protein localises to the cell inner membrane. Functionally, produces ATP from ADP in the presence of a proton gradient across the membrane. This is ATP synthase epsilon chain from Sulfurihydrogenibium sp. (strain YO3AOP1).